Here is a 185-residue protein sequence, read N- to C-terminus: Urease accessory protein UreE (185 aa).

The disordered stretch occupies residues 153 to 185 (LRANSAQGHGHSHSHSHDHHGYHHHGDGHWHKH). The segment covering 162 to 175 (GHSHSHSHDHHGYH) has biased composition (basic residues). A compositionally biased stretch (basic and acidic residues) spans 176–185 (HHGDGHWHKH).

It belongs to the UreE family.

The protein localises to the cytoplasm. Its function is as follows. Involved in urease metallocenter assembly. Binds nickel. Probably functions as a nickel donor during metallocenter assembly. This Haemophilus influenzae (strain PittEE) protein is Urease accessory protein UreE.